The primary structure comprises 64 residues: uncharacterized protein (64 aa).

This is an uncharacterized protein from Bos taurus (Bovine).